The following is a 1392-amino-acid chain: ATP-dependent helicase/nuclease subunit A (1392 aa).

A UvrD-like helicase ATP-binding domain is found at 4 to 595; the sequence is FKPTPAQSKA…IVLGENFRSM (592 aa). Residue 25-32 participates in ATP binding; sequence ASAGSGKT. Positions 623-929 constitute a UvrD-like helicase C-terminal domain; it reads AHLKYAATYY…NVMTIHGSKG (307 aa).

Belongs to the helicase family. AddA subfamily. As to quaternary structure, heterodimer of AddA and AddB/RexB. The cofactor is Mg(2+).

The catalysed reaction is Couples ATP hydrolysis with the unwinding of duplex DNA by translocating in the 3'-5' direction.. It catalyses the reaction ATP + H2O = ADP + phosphate + H(+). Its function is as follows. The heterodimer acts as both an ATP-dependent DNA helicase and an ATP-dependent, dual-direction single-stranded exonuclease. Recognizes the chi site generating a DNA molecule suitable for the initiation of homologous recombination. The AddA nuclease domain is required for chi fragment generation; this subunit has the helicase and 3' -&gt; 5' nuclease activities. The sequence is that of ATP-dependent helicase/nuclease subunit A from Limosilactobacillus reuteri subsp. reuteri (strain JCM 1112) (Lactobacillus reuteri).